The following is a 237-amino-acid chain: H/ACA ribonucleoprotein complex subunit 1 (237 aa).

Gly residues-rich tracts occupy residues 1–59 and 172–237; these read MGFG…GGRG and RGGG…RGRW. Disordered regions lie at residues 1-64 and 157-237; these read MGFG…FDTG and KPPQ…RGRW. RGG-box regions lie at residues 4–56 and 166–236; these read GKPR…GRGG and KAFT…GRGR.

Belongs to the GAR1 family. In terms of assembly, component of the box H/ACA small nucleolar ribonucleoprotein (H/ACA snoRNP) complex consisting of Nop60B, Gar1, NPH2 and Nop10, and associated with H/ACA-type snoRNAs.

Its subcellular location is the nucleus. It is found in the nucleolus. Functionally, component of the box H/ACA small nucleolar ribonucleoprotein (H/ACA snoRNP) complex, which catalyzes pseudouridylation of rRNA. This involves the isomerization of uridine such that the ribose is subsequently attached to C5, instead of the normal N1. Pseudouridine ('psi') residues may serve to stabilize the conformation of rRNAs. Required for ribosome biogenesis. H/ACA snoRNP complex-dependent ribosome biogenesis is important in female germline cell differentiation during oogenesis. This is H/ACA ribonucleoprotein complex subunit 1 from Drosophila melanogaster (Fruit fly).